We begin with the raw amino-acid sequence, 275 residues long: 4-diphosphocytidyl-2-C-methyl-D-erythritol kinase (275 aa).

K14 is an active-site residue. 98 to 108 contacts ATP; that stretch reads PMGAGLGGGSS. Residue D140 is part of the active site.

This sequence belongs to the GHMP kinase family. IspE subfamily.

The enzyme catalyses 4-CDP-2-C-methyl-D-erythritol + ATP = 4-CDP-2-C-methyl-D-erythritol 2-phosphate + ADP + H(+). It functions in the pathway isoprenoid biosynthesis; isopentenyl diphosphate biosynthesis via DXP pathway; isopentenyl diphosphate from 1-deoxy-D-xylulose 5-phosphate: step 3/6. Functionally, catalyzes the phosphorylation of the position 2 hydroxy group of 4-diphosphocytidyl-2C-methyl-D-erythritol. The polypeptide is 4-diphosphocytidyl-2-C-methyl-D-erythritol kinase (Francisella tularensis subsp. tularensis (strain FSC 198)).